We begin with the raw amino-acid sequence, 423 residues long: Galactosylceramide sulfotransferase (423 aa).

Residues 1 to 14 are Cytoplasmic-facing; that stretch reads MPLPQKKRWESMAK. A helical; Signal-anchor for type II membrane protein membrane pass occupies residues 15–35; the sequence is GLVLGALFTSFLLLLYSYAVP. The Lumenal portion of the chain corresponds to 36-423; the sequence is PLYTGLASTT…WKFIRDFLRW (388 aa). Residues 48–70 form a disordered region; it reads GAAPCSPAPREPEAPTSANGSAG. N-linked (GlcNAc...) asparagine glycans are attached at residues Asn-66, Asn-156, and Asn-312.

The protein belongs to the galactose-3-O-sulfotransferase family.

Its subcellular location is the golgi apparatus membrane. It carries out the reaction a beta-D-galactosyl-(1&lt;-&gt;1')-N-acylsphing-4-enine + 3'-phosphoadenylyl sulfate = an N-acyl-1-beta-D-(3-O-sulfo)-galactosyl-sphing-4-enine + adenosine 3',5'-bisphosphate + H(+). The catalysed reaction is a 1-O-alkyl-2-acyl-3-O-(beta-D-galactosyl)-sn-glycerol + 3'-phosphoadenylyl sulfate = a 1-O-alkyl-2-acyl-3-(beta-D-3-sulfogalactosyl)-sn-glycerol + adenosine 3',5'-bisphosphate + H(+). It catalyses the reaction a beta-D-Gal-(1&lt;-&gt;1')-ceramide + 3'-phosphoadenylyl sulfate = 1-(3-O-sulfo-beta-D-galactosyl)-ceramide + adenosine 3',5'-bisphosphate + H(+). The enzyme catalyses a 1,2-diacyl-3-O-(beta-D-galactosyl)-sn-glycerol + 3'-phosphoadenylyl sulfate = 1,2-diacyl-3-(3-O-sulfo-beta-D-galactosyl)-sn-glycerol + adenosine 3',5'-bisphosphate + H(+). It carries out the reaction a beta-D-Gal-(1-&gt;4)-beta-D-Glc-(1&lt;-&gt;1)-Cer(d18:1(4E)) + 3'-phosphoadenylyl sulfate = beta-D-3-sulfogalactosyl-(1-&gt;4)-beta-D-glucosyl-(1&lt;-&gt;1')-N-acylsphing-4-enine + adenosine 3',5'-bisphosphate + H(+). It functions in the pathway lipid metabolism; sphingolipid metabolism. In terms of biological role, catalyzes the transfer of a sulfate group to position 3 of non-reducing beta-galactosyl residues in glycerolipids and sphingolipids, therefore participates in the biosynthesis of sulfoglycolipids. Catalyzes the synthesis of galactosylceramide sulfate (sulfatide), a major lipid component of the myelin sheath and of monogalactosylalkylacylglycerol sulfate (seminolipid), present in spermatocytes. Seems to prefer beta-glycosides at the non-reducing termini of sugar chains attached to a lipid moiety. Also acts on lactosylceramide, galactosyl 1-alkyl-2-sn-glycerol and galactosyl diacylglycerol (in vitro). The chain is Galactosylceramide sulfotransferase from Bos taurus (Bovine).